The primary structure comprises 192 residues: Xanthine phosphoribosyltransferase (192 aa).

2 residues coordinate xanthine: leucine 20 and asparagine 27. 128–132 (ANGDA) lines the 5-phospho-alpha-D-ribose 1-diphosphate pocket. Xanthine is bound at residue lysine 156.

This sequence belongs to the purine/pyrimidine phosphoribosyltransferase family. Xpt subfamily. Homodimer.

Its subcellular location is the cytoplasm. The catalysed reaction is XMP + diphosphate = xanthine + 5-phospho-alpha-D-ribose 1-diphosphate. It participates in purine metabolism; XMP biosynthesis via salvage pathway; XMP from xanthine: step 1/1. Functionally, converts the preformed base xanthine, a product of nucleic acid breakdown, to xanthosine 5'-monophosphate (XMP), so it can be reused for RNA or DNA synthesis. The chain is Xanthine phosphoribosyltransferase from Staphylococcus carnosus (strain TM300).